A 126-amino-acid polypeptide reads, in one-letter code: Large ribosomal subunit protein bL17 (126 aa).

Belongs to the bacterial ribosomal protein bL17 family. As to quaternary structure, part of the 50S ribosomal subunit. Contacts protein L32.

The protein is Large ribosomal subunit protein bL17 of Lactococcus lactis subsp. lactis (strain IL1403) (Streptococcus lactis).